Reading from the N-terminus, the 253-residue chain is Tetraspanin-3 (253 aa).

At 1–11 (MGQCGITSSKT) the chain is on the cytoplasmic side. The chain crosses the membrane as a helical span at residues 12-32 (VLVFLNLIFWGAAGILCYVGA). Topologically, residues 33–50 (YVFITYDDYDHFFEDVYT) are extracellular. Residues 51–71 (LIPAVVIIAVGALLFIIGLIG) traverse the membrane as a helical segment. Topologically, residues 72–85 (CCATIRESRCGLAT) are cytoplasmic. The helical transmembrane segment at 86–106 (FVIILLLVFVTEVVVVVLGYV) threads the bilayer. The Extracellular segment spans residues 107-212 (YRAKVENEVD…KKLQEIMMHV (106 aa)). Asparagine 127, asparagine 152, asparagine 167, and asparagine 183 each carry an N-linked (GlcNAc...) asparagine glycan. Residues 213 to 233 (IWAALAFAAIQLLGMLCACIV) form a helical membrane-spanning segment. Residues 234–253 (LCRRSRDPAYELLITGGAYA) lie on the Cytoplasmic side of the membrane.

The protein belongs to the tetraspanin (TM4SF) family. As to quaternary structure, interacts with claudin-11/CLDN11 and integrins.

Its subcellular location is the membrane. In terms of biological role, regulates the proliferation and migration of oligodendrocytes, a process essential for normal myelination and repair. This chain is Tetraspanin-3 (TSPAN3), found in Bos taurus (Bovine).